A 101-amino-acid polypeptide reads, in one-letter code: MTVRILAVCGNGQGSSMIMKMKVDQFLTQSNIDHTVNSCAVGEYKSELSGADIIIASTHIAGEITVTGNKYVVGVRNMLSPADFGPKLLEVIKAHFPQDVK.

The PTS EIIB type-2 domain occupies 3-96 (VRILAVCGNG…KLLEVIKAHF (94 aa)). The active-site Phosphocysteine intermediate is the Cys9. Cys9 carries the post-translational modification Phosphocysteine.

It localises to the cytoplasm. The catalysed reaction is N(pros)-phospho-L-histidyl-[protein] + L-ascorbate(out) = L-ascorbate 6-phosphate(in) + L-histidyl-[protein]. In terms of biological role, the phosphoenolpyruvate-dependent sugar phosphotransferase system (sugar PTS), a major carbohydrate active transport system, catalyzes the phosphorylation of incoming sugar substrates concomitantly with their translocation across the cell membrane. The enzyme II UlaABC PTS system is involved in ascorbate transport. In Escherichia coli O6:H1 (strain CFT073 / ATCC 700928 / UPEC), this protein is Ascorbate-specific PTS system EIIB component (ulaB).